The following is a 63-amino-acid chain: Conotoxin Lt11.1 (63 aa).

An N-terminal signal peptide occupies residues 1–23 (MMFRLTSVLLVIVLLNLVVLTNA). Intrachain disulfides connect Cys24–Cys34, Cys28–Cys39, Cys33–Cys42, and Cys38–Cys47. Positions 53–63 (ALLQRLLGHQR) are excised as a propeptide.

It belongs to the conotoxin I2 superfamily. Expressed by the venom duct.

The protein resides in the secreted. The protein is Conotoxin Lt11.1 of Conus litteratus (Lettered cone).